The chain runs to 152 residues: Large ribosomal subunit protein uL13 (152 aa).

The interval 130–152 (HPHEAQSPEVLDLASKNPKNTRS) is disordered.

The protein belongs to the universal ribosomal protein uL13 family. In terms of assembly, part of the 50S ribosomal subunit.

Its function is as follows. This protein is one of the early assembly proteins of the 50S ribosomal subunit, although it is not seen to bind rRNA by itself. It is important during the early stages of 50S assembly. The protein is Large ribosomal subunit protein uL13 of Dinoroseobacter shibae (strain DSM 16493 / NCIMB 14021 / DFL 12).